We begin with the raw amino-acid sequence, 378 residues long: 23S rRNA (uracil(747)-C(5))-methyltransferase RlmC (378 aa).

Residues Cys-3, Cys-11, Cys-14, and Cys-87 each contribute to the [4Fe-4S] cluster site. S-adenosyl-L-methionine-binding residues include Gln-212, Phe-241, Glu-262, and Asn-309. Cys-336 (nucleophile) is an active-site residue.

Belongs to the class I-like SAM-binding methyltransferase superfamily. RNA M5U methyltransferase family. RlmC subfamily.

The enzyme catalyses uridine(747) in 23S rRNA + S-adenosyl-L-methionine = 5-methyluridine(747) in 23S rRNA + S-adenosyl-L-homocysteine + H(+). Its function is as follows. Catalyzes the formation of 5-methyl-uridine at position 747 (m5U747) in 23S rRNA. The polypeptide is 23S rRNA (uracil(747)-C(5))-methyltransferase RlmC (Shewanella pealeana (strain ATCC 700345 / ANG-SQ1)).